A 278-amino-acid polypeptide reads, in one-letter code: Embryonic polyadenylate-binding protein 2 (278 aa).

Disordered regions lie at residues 21–66 (VSSD…GDAG) and 101–128 (EGTP…LSPE). Residues 35–50 (ETKEILGPEGGEGKEE) are compositionally biased toward basic and acidic residues. Residues 51-63 (KEEEEDAEEDQDG) show a composition bias toward acidic residues. The RRM domain occupies 147 to 224 (RSVYVGNVDY…RVIKVLPKRT (78 aa)). The tract at residues 227–278 (PGISSTDRGGLRGHPGSRGAPFPHSGLQGRPRLRPQGQNRARGKFSPWFSPY) is disordered.

As to expression, expressed in various adult tissues.

It is found in the cytoplasm. Functionally, binds the poly(A) tail of mRNA. The polypeptide is Embryonic polyadenylate-binding protein 2 (PABPN1L) (Homo sapiens (Human)).